We begin with the raw amino-acid sequence, 360 residues long: Peptide chain release factor 1 (360 aa).

Gln235 is modified (N5-methylglutamine). Basic and acidic residues predominate over residues 284–293; that stretch reads HKRQQEEAST. The segment at 284-305 is disordered; the sequence is HKRQQEEASTRRNLLGSGDRSD.

The protein belongs to the prokaryotic/mitochondrial release factor family. Post-translationally, methylated by PrmC. Methylation increases the termination efficiency of RF1.

The protein localises to the cytoplasm. In terms of biological role, peptide chain release factor 1 directs the termination of translation in response to the peptide chain termination codons UAG and UAA. The protein is Peptide chain release factor 1 of Pectobacterium atrosepticum (strain SCRI 1043 / ATCC BAA-672) (Erwinia carotovora subsp. atroseptica).